Reading from the N-terminus, the 34-residue chain is Unknown protein 5 (34 aa).

In Pseudotsuga menziesii (Douglas-fir), this protein is Unknown protein 5.